Here is a 193-residue protein sequence, read N- to C-terminus: MARPKSEDKKQALLEAATQAIAQSGIAASTAVIARNAGVAEGTLFRYFATKDELINTLYLHLKQDLCQSMIMELDRSITDAKMMTRFIWNSYISWGLNHPARHRAIRQLAVSEKLTKETEQRADDMFPELRDLCHRSVLMVFMSDEYRAFGDGLFLALAETTMDFAARDPARAGEYIALGFEAMWRALTREEQ.

Positions 7-66 constitute an HTH tetR-type domain; it reads EDKKQALLEAATQAIAQSGIAASTAVIARNAGVAEGTLFRYFATKDELINTLYLHLKQDL. A DNA-binding region (H-T-H motif) is located at residues 29-48; that stretch reads STAVIARNAGVAEGTLFRYF.

In terms of assembly, homodimer. May bind DNA either as a homodimer or as a pair of homodimers. Various chemicals reduce DNA-binding in vitro, including bile acids, such as cholic and chenodeoxycholic acids, and antimicrobial drugs, such as berberine, crystal violet, dequalinium, ethidium bromide and rhodamine 6G. Binds small regulatory RNA StyR3.

In terms of biological role, transcriptional regulator. Represses the transcription of the transcriptional activator RamA and, thereby, leads to repression of the expression of the efflux pump subunits AcrA and AcrB, and TolC. Acts by binding directly to the promoter region of the ramA gene. Promoter binding may be inhibited partially by the small regulatory RNA StyR3, perhaps thereby ensuring a basal level of expression of RamA. The chain is Transcriptional regulator RamR from Salmonella typhimurium (strain LT2 / SGSC1412 / ATCC 700720).